The following is a 109-amino-acid chain: Large ribosomal subunit protein uL24 (109 aa).

Belongs to the universal ribosomal protein uL24 family. In terms of assembly, part of the 50S ribosomal subunit.

One of two assembly initiator proteins, it binds directly to the 5'-end of the 23S rRNA, where it nucleates assembly of the 50S subunit. Its function is as follows. One of the proteins that surrounds the polypeptide exit tunnel on the outside of the subunit. This chain is Large ribosomal subunit protein uL24, found in Rickettsia akari (strain Hartford).